A 718-amino-acid polypeptide reads, in one-letter code: Kinesin-like protein KIF2C (718 aa).

Positions 1-248 (MESLPARLFP…CHPLTLTDPT (248 aa)) are globular. Phosphoserine is present on residues S3 and S19. The segment at 86–111 (PKQKRRSVNSKIPAPKEGLRSRSTRM) is disordered. The residue at position 92 (S92) is a Phosphoserine; by AURKB. The Microtubule tip localization signal signature appears at 95–98 (SKIP). S106, S108, S112, S163, and S186 each carry phosphoserine. Positions 201 to 232 (EKRAQNSEIRIKRAQEYDSSFPNWEFARMIKE) are negative regulator of microtubule-binding. The Kinesin motor domain maps to 252-582 (RICVCVRKRP…LRYADRVKEL (331 aa)). Residues R258 and 342 to 349 (GQTGSGKT) each bind ATP. Residues 409–412 (KKAK) carry the Nuclear localization signal motif. A phosphoserine mark is found at S513 and S626. Coiled-coil stretches lie at residues 613–651 (NFKE…IIQQ) and 689–716 (ALRE…SKKR).

It belongs to the TRAFAC class myosin-kinesin ATPase superfamily. Kinesin family. MCAK/KIF2 subfamily. In terms of assembly, interacts with CENPH. Interacts with MTUS2/TIP150; the interaction is direct. Interacts with MAPRE1; the interaction is direct, regulated by phosphorylation and is probably required for targeting to growing microtubule plus ends. Interacts with KIF18B at microtubule tips; this interaction increases the affinity of both partners for microtubule plus ends and is required for robust microtubule depolymerization. Phosphorylation by AURKA or AURKB strongly reduces KIF18B-binding. In terms of processing, phosphorylation by AURKB, regulates association with centromeres and kinetochores and the microtubule depolymerization activity. Post-translationally, ubiquitinated.

Its subcellular location is the cytoplasm. The protein resides in the cytoskeleton. The protein localises to the nucleus. It is found in the chromosome. It localises to the centromere. Its subcellular location is the kinetochore. In complex with KIF18B, constitutes the major microtubule plus-end depolymerizing activity in mitotic cells. Regulates the turnover of microtubules at the kinetochore and functions in chromosome segregation during mitosis. Plays a role in chromosome congression and is required for the lateral to end-on conversion of the chromosome-microtubule attachment. The chain is Kinesin-like protein KIF2C (KIF2C) from Cricetulus griseus (Chinese hamster).